Here is a 190-residue protein sequence, read N- to C-terminus: Glutathione peroxidase 2 (190 aa).

The active site involves Sec40. Sec40 is a non-standard amino acid (selenocysteine).

Belongs to the glutathione peroxidase family. In terms of assembly, homotetramer.

The protein localises to the cytoplasm. The protein resides in the cytosol. The enzyme catalyses 2 glutathione + H2O2 = glutathione disulfide + 2 H2O. It catalyses the reaction a hydroperoxy polyunsaturated fatty acid + 2 glutathione = a hydroxy polyunsaturated fatty acid + glutathione disulfide + H2O. The catalysed reaction is tert-butyl hydroperoxide + 2 glutathione = tert-butanol + glutathione disulfide + H2O. It carries out the reaction cumene hydroperoxide + 2 glutathione = 2-phenylpropan-2-ol + glutathione disulfide + H2O. The enzyme catalyses (13S)-hydroperoxy-(9Z,11E)-octadecadienoate + 2 glutathione = (13S)-hydroxy-(9Z,11E)-octadecadienoate + glutathione disulfide + H2O. It catalyses the reaction (5S)-hydroperoxy-(6E,8Z,11Z,14Z)-eicosatetraenoate + 2 glutathione = (5S)-hydroxy-(6E,8Z,11Z,14Z)-eicosatetraenoate + glutathione disulfide + H2O. The catalysed reaction is (12R)-hydroperoxy-(5Z,8Z,10E,14Z)-eicosatetraenoate + 2 glutathione = (12R)-hydroxy-(5Z,8Z,10E,14Z)-eicosatetraenoate + glutathione disulfide + H2O. It carries out the reaction (15S)-hydroperoxy-(5Z,8Z,11Z,13E)-eicosatetraenoate + 2 glutathione = (15S)-hydroxy-(5Z,8Z,11Z,13E)-eicosatetraenoate + glutathione disulfide + H2O. Catalyzes the reduction of hydroperoxides in a glutathione-dependent manner thus regulating cellular redox homeostasis. Can reduce small soluble hydroperoxides such as H2O2, cumene hydroperoxide and tert-butyl hydroperoxide, as well as several fatty acid-derived hydroperoxides. Cannot reduce phosphatidycholine hydroperoxide. The chain is Glutathione peroxidase 2 (GPX2) from Pongo pygmaeus (Bornean orangutan).